The chain runs to 515 residues: Cytochrome P450 2D7 (515 aa).

Residues 1 to 2 (MG) lie on the Extracellular side of the membrane. A helical membrane pass occupies residues 3–23 (LEALVPLAMIVAIFLLLVDLM). Topologically, residues 24-301 (HRHQRWAARY…DENLRIVVGN (278 aa)) are cytoplasmic. A helical membrane pass occupies residues 302 to 322 (LFLAGMVTTSTTLAWGLLLMI). Residues 323–515 (LHLDVQRGRR…SPYELCAVPR (193 aa)) lie on the Extracellular side of the membrane. Asparagine 416 carries N-linked (GlcNAc...) asparagine glycosylation. Cysteine 461 contributes to the heme binding site.

It belongs to the cytochrome P450 family. Heme serves as cofactor. Expressed in brain cortex (at protein level).

It is found in the membrane. It localises to the cytoplasm. The protein localises to the mitochondrion. The catalysed reaction is an organic molecule + reduced [NADPH--hemoprotein reductase] + O2 = an alcohol + oxidized [NADPH--hemoprotein reductase] + H2O + H(+). May be responsible for the metabolism of many drugs and environmental chemicals that it oxidizes. It may be involved in the metabolism of codeine to morphine. However, another study could not confirm it. In Homo sapiens (Human), this protein is Cytochrome P450 2D7.